The primary structure comprises 283 residues: Acetylglutamate kinase (283 aa).

Residues 64–65 (GG), Arg86, and Asn181 each bind substrate.

The protein belongs to the acetylglutamate kinase family. ArgB subfamily.

The protein localises to the cytoplasm. The enzyme catalyses N-acetyl-L-glutamate + ATP = N-acetyl-L-glutamyl 5-phosphate + ADP. The protein operates within amino-acid biosynthesis; L-arginine biosynthesis; N(2)-acetyl-L-ornithine from L-glutamate: step 2/4. Its function is as follows. Catalyzes the ATP-dependent phosphorylation of N-acetyl-L-glutamate. The polypeptide is Acetylglutamate kinase (Sulfurimonas denitrificans (strain ATCC 33889 / DSM 1251) (Thiomicrospira denitrificans (strain ATCC 33889 / DSM 1251))).